A 483-amino-acid polypeptide reads, in one-letter code: MKHYVAVDIGASSGRLILGKLVNEKLQLEEIHRFKNGFTYRDGHERWEIDQLMQEIFIGLEKVKQLGISECVLGIDTWGVDYVLIGASGEKLADPISYRDKRTLNAVQNLTSEYPREYIYKKTGIQFMELNTLYQLYVEERNLLERAEKILLIPDYIGYVLTGVKVAETTNSSTTQMLNLREQLFDKDLLSHLNIDVEKFAPLTDAGTYLGKVKAEWLEEYDIPNCDVVTVATHDTASAVVGTPAEGENWAFLSSGTWSLIGMELIAPINNEAAFKENYTNEWGAYGTYRFLKNIMGLWIVQEIARMDDYKHSFAEMAEEASNYPYFKQIINVNDARFNNPENMVDEIKLYCQETGQTVPETIGELTNCVYGSLALYYALELEKMTEITGKKIEKLYIVGGGSNVAMLNQLTAKLAGIEVFAGPSEATAIGNLVVQMINQGEIESMRAGRKIIRNSFEIGEFSCGDVRFEEIKERFTKVLEFN.

11-15 is an ATP binding site; it reads ASSGR. Residues Gly-79 and 234–236 contribute to the substrate site; that span reads HDT. Asp-235 (proton acceptor) is an active-site residue. ATP is bound at residue Thr-257. Asn-294 lines the substrate pocket. Gln-302 lines the ATP pocket. The cysteines at positions 352 and 369 are disulfide-linked. ATP is bound at residue Gly-401.

This sequence belongs to the rhamnulokinase family. Mg(2+) serves as cofactor.

It catalyses the reaction L-rhamnulose + ATP = L-rhamnulose 1-phosphate + ADP + H(+). The protein operates within carbohydrate degradation; L-rhamnose degradation; glycerone phosphate from L-rhamnose: step 2/3. Its function is as follows. Involved in the catabolism of L-rhamnose (6-deoxy-L-mannose). Catalyzes the transfer of the gamma-phosphate group from ATP to the 1-hydroxyl group of L-rhamnulose to yield L-rhamnulose 1-phosphate. In Listeria innocua serovar 6a (strain ATCC BAA-680 / CLIP 11262), this protein is Rhamnulokinase.